Here is an 88-residue protein sequence, read N- to C-terminus: Apolipoprotein C-I (88 aa).

The first 26 residues, 1–26 (MRLLISLPVLIVVLAMALEGPAPAQA), serve as a signal peptide directing secretion.

It belongs to the apolipoprotein C1 family.

The protein localises to the secreted. In terms of biological role, inhibitor of lipoprotein binding to the low density lipoprotein (LDL) receptor, LDL receptor-related protein, and very low density lipoprotein (VLDL) receptor. Associates with high density lipoproteins (HDL) and the triacylglycerol-rich lipoproteins in the plasma and makes up about 10% of the protein of the VLDL and 2% of that of HDL. Appears to interfere directly with fatty acid uptake and is also the major plasma inhibitor of cholesteryl ester transfer protein (CETP). Modulates the interaction of APOE with beta-migrating VLDL and inhibits binding of beta-VLDL to the LDL receptor-related protein. Binds free fatty acids and reduces their intracellular esterification. The polypeptide is Apolipoprotein C-I (APOC1) (Mesocricetus auratus (Golden hamster)).